Consider the following 1016-residue polypeptide: Probably inactive leucine-rich repeat receptor-like protein kinase At3g28040 (1016 aa).

The N-terminal stretch at 1 to 26 (MGKQRRTMISFTLFLTLTMMSSLING) is a signal peptide. Residues 27 to 646 (DTDSIQLNDD…FHRRMFLSVS (620 aa)) are Extracellular-facing. LRR repeat units follow at residues 102 to 124 (RLKV…SNNN), 125 to 147 (HLQK…LGSI), 149 to 171 (SLQH…LFNN), 174 to 196 (SLRY…LFRC), 198 to 219 (VLNS…VSGI), 224 to 245 (RLRA…GILS), 248 to 270 (NLKE…IGLC), 272 to 295 (HLNR…QKLK), 296 to 318 (SLNH…IGDM), 320 to 342 (GLVH…ISNL), 344 to 366 (SLKD…LESC), 368 to 390 (ELMI…FFDL), 391 to 413 (GLQE…SSRL), 416 to 438 (SLIR…VGLF), 440 to 462 (HMRY…IEFL), 464 to 486 (NLTV…ICES), 488 to 510 (SLQI…IGNC), 512 to 535 (SLKL…SNLQ), 536 to 559 (ELKI…GDLQ), and 560 to 582 (NLLL…DVFQ). N112, N135, and N171 each carry an N-linked (GlcNAc...) asparagine glycan. N203 carries N-linked (GlcNAc...) asparagine glycosylation. N349 carries an N-linked (GlcNAc...) asparagine glycan. Residues N445, N464, N509, and N522 are each glycosylated (N-linked (GlcNAc...) asparagine). Residue N565 is glycosylated (N-linked (GlcNAc...) asparagine). A helical transmembrane segment spans residues 647–667 (VIVAISAAILIFSGVIIITLL). The Cytoplasmic segment spans residues 668 to 1016 (NASVRRRLAF…PVPHRIMDSF (349 aa)). The 288-residue stretch at 726 to 1013 (LNKASRIGEG…INSPVPHRIM (288 aa)) folds into the Protein kinase domain. Residues 732-740 (IGEGVFGTV) and K755 contribute to the ATP site. Phosphotyrosine is present on residues Y841 and Y898.

Belongs to the protein kinase superfamily. Ser/Thr protein kinase family.

Its subcellular location is the membrane. The polypeptide is Probably inactive leucine-rich repeat receptor-like protein kinase At3g28040 (Arabidopsis thaliana (Mouse-ear cress)).